A 511-amino-acid polypeptide reads, in one-letter code: V-type proton ATPase subunit B (511 aa).

ATP is bound at residue Arg381. The tract at residues 484 to 511 (FYGRDREQDDDEEEEEDPDKSGDKLIDA) is disordered. The span at 491 to 501 (QDDDEEEEEDP) shows a compositional bias: acidic residues. Positions 502 to 511 (DKSGDKLIDA) are enriched in basic and acidic residues.

Belongs to the ATPase alpha/beta chains family. V-ATPase is a heteromultimeric enzyme composed of a peripheral catalytic V1 complex (components A to H) attached to an integral membrane V0 proton pore complex (components: a, c, c', c'', d, e, f and VOA1).

The protein localises to the vacuole membrane. Non-catalytic subunit of the V1 complex of vacuolar(H+)-ATPase (V-ATPase), a multisubunit enzyme composed of a peripheral complex (V1) that hydrolyzes ATP and a membrane integral complex (V0) that translocates protons. V-ATPase is responsible for acidifying and maintaining the pH of intracellular compartments. This chain is V-type proton ATPase subunit B (VMA2), found in Candida tropicalis (Yeast).